The following is an 80-amino-acid chain: Large ribosomal subunit protein bL31B (80 aa).

It belongs to the bacterial ribosomal protein bL31 family. Type B subfamily. As to quaternary structure, part of the 50S ribosomal subunit.

This is Large ribosomal subunit protein bL31B from Streptococcus sanguinis (strain SK36).